A 329-amino-acid chain; its full sequence is 4-hydroxythreonine-4-phosphate dehydrogenase (329 aa).

Substrate contacts are provided by H136 and T137. A divalent metal cation-binding residues include H166, H211, and H266. The substrate site is built by K274, N283, and R292.

The protein belongs to the PdxA family. As to quaternary structure, homodimer. Requires Zn(2+) as cofactor. It depends on Mg(2+) as a cofactor. Co(2+) is required as a cofactor.

The protein localises to the cytoplasm. The catalysed reaction is 4-(phosphooxy)-L-threonine + NAD(+) = 3-amino-2-oxopropyl phosphate + CO2 + NADH. Its pathway is cofactor biosynthesis; pyridoxine 5'-phosphate biosynthesis; pyridoxine 5'-phosphate from D-erythrose 4-phosphate: step 4/5. Catalyzes the NAD(P)-dependent oxidation of 4-(phosphooxy)-L-threonine (HTP) into 2-amino-3-oxo-4-(phosphooxy)butyric acid which spontaneously decarboxylates to form 3-amino-2-oxopropyl phosphate (AHAP). The sequence is that of 4-hydroxythreonine-4-phosphate dehydrogenase from Pseudomonas syringae pv. tomato (strain ATCC BAA-871 / DC3000).